A 355-amino-acid chain; its full sequence is Guanine nucleotide-binding protein G(z) subunit alpha (355 aa).

A compositionally biased stretch (basic and acidic residues) spans 1-14 (MGCRQSSEEKEAAR). The disordered stretch occupies residues 1-26 (MGCRQSSEEKEAARRSRRIDRHLRSE). Residue Gly-2 is the site of N-myristoyl glycine attachment. A lipid anchor (S-palmitoyl cysteine) is attached at Cys-3. Residues 32–355 (REIKLLLLGT…QNNLKYIGLC (324 aa)) form the G-alpha domain. The G1 motif stretch occupies residues 35–48 (KLLLLGTSNSGKST). GTP is bound by residues 40–47 (GTSNSGKS), 176–182 (LRSRDMT), 201–205 (DVGGQ), 270–273 (NKKD), and Ala-327. Mg(2+) contacts are provided by Ser-47 and Thr-182. Residues 174–182 (DILRSRDMT) form a G2 motif region. The tract at residues 197 to 206 (FKMVDVGGQR) is G3 motif. Residues 266 to 273 (ILFLNKKD) form a G4 motif region. The G5 motif stretch occupies residues 325-330 (TCATDT).

It belongs to the G-alpha family. G(i/o/t/z) subfamily. In terms of assembly, G-proteins are composed of 3 units; alpha, beta and gamma. The alpha chain contains the guanine nucleotide binding site. Interacts with ADGRB2.

It is found in the membrane. In terms of biological role, guanine nucleotide-binding proteins (G proteins) are involved as modulators or transducers in various transmembrane signaling systems. This Rattus norvegicus (Rat) protein is Guanine nucleotide-binding protein G(z) subunit alpha (Gnaz).